The primary structure comprises 1490 residues: MKHLKGLLLPALLALASSAAAKDPLVETTPFKNELVNLMYFDDSGVALVQELDNGKIFRSHDAGKGWKEIKNVKGLGIMKSPYDNKVALILGEKKHWITFDQGENWDSFETELPPSPQSPVGWHAQDNKKILLNEIENCFTAPCLGRTYYTTDGFKTDPKVLVDNRRMCQWAKASERFLQGMDKHDDRILCITRGKYSDRSKDFRLLMSDNFFKETEEPVMSSGRTVQGMANMAAVKGYIVAAAKAEHSSELALYVTQDTDSWHHALFGDHKIEEDAYTILESTNYSIQVDVMTSKYVTMGNLYTSNSNGTYFTKNVEHTNRNEAGYVDFEKIANIQGVVLVNTVDNYKEVEKSGQSKKLKSRISFDDGRSFEKLTVKGKDGELHLHSVTNLHNSGRVFSSPAPGIVMGVGNTGEFLGKYTDGDLYVSDDAGLTWELALEEAHKYEFGDQGSVLVAVFDEGDTDEIRYSFKHGRKDSWQKIKLDYKIRARELTTLPDSTSLKFIVYASRKKDGGGREHVIVHLDFSDILKKCGDSDFDDEWSVRKDADGDPSCVMGHKQLFRRRKWDAECSIGELFKDPVPKFKPCDCDKFRDYECDFNFTPAGEGKEKKCEPGESFSLPKGACDGDAKSYKGSSGWRKIPGNQCKGETERDKQVERECKDAERPRPKTDKITSEITKFKGSNFMEQYYLERNTQSDGKDNERDKDETVVMLTDERTAYITHDHGKKWKKAVDDEIVRIYPHQYETNNVYFLTASKKVYYSKDRGLHDSINSFEAPVMPNTDMLPIMQFHPKQKDWIIWLGGKNCEKVGNKDCHTVAYVSQKNGEDSSWESLVPFVKKCAFVWREAGRSVKEEQVFCEQHTNEEKNAPLELISSDDWFKKKDVKFKSVVEFATMSEFIIVATKAEDNTLRLDASLDAHTFAEAKFPPKFFDIHQTAYTVLDSSTHAVFLHVTVNPQRDQEYGSIIKSNSNGTSYVMSLAAVNRNSEGYVDFEKMQGLEGVAVANVVVNVDEVNKGSKKKKQSRITHNDGADWEPLQAPEKDSDDKPYDCDVANREKCGLHIHGYTERADPREMYSSPTAVGLMLAVGNVGPELSTFGEANTFMTTDAGITWKEIKKGTYAWEFGDQGSVIVIVRRGEDTDHVYYSTDSGAKWDLYQFADHKMRVEAITTVPSDTSLNFLLWGKDSKELFAVNLDFSGLPEFQKECKLDEHDPTKGDYDLWSPQHPLQQDEPECLFGHVAQYHRKKRDVKCRNGQRIDQMHDIARNCSCTRRDYECAYNYERDSSGDCVLVPGLSLPDPSKVCSNKNVKEYYANTRFRKIPLSTCQGGTEYDKTGDVHPCPGFEEDFQKNHGVGGFTLFLAIVLPFAAAGGVGYWVWRNWDGKFGRIRLGEPGGGSAFDSDAPWVRWPIAAVSGLVAVIAALPLVVGSVWRWVAGRMGGGGGAGGYAGLGGSGYGRAYTSRSSFARGRGEYSVVDPDEGELLGDEESDEDV.

Positions 1-21 are cleaved as a signal peptide; that stretch reads MKHLKGLLLPALLALASSAAA. At 22-1354 the chain is on the lumenal side; it reads KDPLVETTPF…DFQKNHGVGG (1333 aa). A BNR 1 repeat occupies 97-107; sequence WITFDQGENWD. N-linked (GlcNAc...) asparagine glycans are attached at residues Asn285 and Asn309. 3 BNR repeats span residues 364-374, 426-436, and 719-730; these read ISFDDGRSFEK, YVSDDAGLTWE, and YITHDHGKKWKK. Asn970 is a glycosylation site (N-linked (GlcNAc...) asparagine). Residues 1016–1048 are disordered; it reads SKKKKQSRITHNDGADWEPLQAPEKDSDDKPYD. Over residues 1038-1048 the composition is skewed to basic and acidic residues; sequence PEKDSDDKPYD. 2 BNR repeats span residues 1102–1112 and 1143–1153; these read FMTTDAGITWK and YYSTDSGAKWD. A glycan (N-linked (GlcNAc...) asparagine) is linked at Asn1265. Residues 1355–1375 form a helical membrane-spanning segment; that stretch reads FTLFLAIVLPFAAAGGVGYWV. Residues 1376–1405 lie on the Cytoplasmic side of the membrane; it reads WRNWDGKFGRIRLGEPGGGSAFDSDAPWVR. Residues 1406-1426 form a helical membrane-spanning segment; it reads WPIAAVSGLVAVIAALPLVVG. At 1427-1490 the chain is on the lumenal side; that stretch reads SVWRWVAGRM…LGDEESDEDV (64 aa). The segment at 1465–1490 is disordered; the sequence is RGRGEYSVVDPDEGELLGDEESDEDV. Over residues 1474-1490 the composition is skewed to acidic residues; it reads DPDEGELLGDEESDEDV.

It belongs to the VPS10-related sortilin family.

The protein resides in the golgi apparatus. It is found in the trans-Golgi network membrane. It localises to the prevacuolar compartment membrane. In terms of biological role, functions as a sorting receptor in the Golgi compartment required for the intracellular sorting and delivery of soluble vacuolar proteins, like carboxypeptidase Y (CPY) and proteinase A. Executes multiple rounds of sorting by cycling between the late Golgi and a prevacuolar endosome-like compartment. This chain is Vacuolar protein sorting/targeting protein 10 (vps10), found in Pyrenophora teres f. teres (strain 0-1) (Barley net blotch fungus).